The chain runs to 196 residues: Charged multivesicular body protein 1a (196 aa).

The stretch at 5–41 (LFQLKFTAKQLEKLAKKAEKDSNTEQAKVKKALQQKN) forms a coiled coil. Residues 170-181 (QGASSVGESSTR) show a composition bias toward polar residues. The interval 170-196 (QGASSVGESSTRTQEDQLSRRLASLRN) is disordered. Positions 185–195 (DQLSRRLASLR) match the MIT-interacting motif motif.

Belongs to the SNF7 family. In terms of assembly, probable peripherally associated component of the endosomal sorting required for transport complex III (ESCRT-III).

The protein localises to the cytoplasm. Its subcellular location is the endosome membrane. Its function is as follows. Probable peripherally associated component of the endosomal sorting required for transport complex III (ESCRT-III) which is involved in multivesicular bodies (MVBs) formation and sorting of endosomal cargo proteins into MVBs. MVBs contain intraluminal vesicles (ILVs) that are generated by invagination and scission from the limiting membrane of the endosome and mostly are delivered to lysosomes enabling degradation of membrane proteins, such as stimulated growth factor receptors, lysosomal enzymes and lipids. This chain is Charged multivesicular body protein 1a (chmp1a), found in Xenopus laevis (African clawed frog).